Here is a 210-residue protein sequence, read N- to C-terminus: MARNIGAVCRRCRRENLKLFLKGDRCYSDKCSFERRAFAPGQHGQARFKKVSDYAVQLREKQKVKSMYGVLEAQFRLTFEKAEAQKGVAGENLLILLERRLDNAVFRAGFASSRTQARQIVRHKHILINGKRVDIPSYQVSEGDVISLREKSRANAGVVDNLEAVVRRGVPTWLELDKDNFKASVKALPNREEITMPIQERLIVELYSKN.

In terms of domain architecture, S4 RNA-binding spans 99 to 170; the sequence is RRLDNAVFRA…NLEAVVRRGV (72 aa).

It belongs to the universal ribosomal protein uS4 family. Part of the 30S ribosomal subunit. Contacts protein S5. The interaction surface between S4 and S5 is involved in control of translational fidelity.

One of the primary rRNA binding proteins, it binds directly to 16S rRNA where it nucleates assembly of the body of the 30S subunit. Functionally, with S5 and S12 plays an important role in translational accuracy. This Desulfotalea psychrophila (strain LSv54 / DSM 12343) protein is Small ribosomal subunit protein uS4.